The chain runs to 856 residues: DNA mismatch repair protein MutS (856 aa).

Residue 618–625 (GPNMGGKS) participates in ATP binding.

The protein belongs to the DNA mismatch repair MutS family.

Functionally, this protein is involved in the repair of mismatches in DNA. It is possible that it carries out the mismatch recognition step. This protein has a weak ATPase activity. The chain is DNA mismatch repair protein MutS from Shewanella putrefaciens (strain CN-32 / ATCC BAA-453).